Reading from the N-terminus, the 369-residue chain is Gibberellin 3-beta-dioxygenase 2-3 (369 aa).

In terms of domain architecture, Fe2OG dioxygenase spans 205 to 306; the sequence is MTATMHLNWY…RISLGYFLGP (102 aa). The Fe cation site is built by His-229, Asp-231, and His-287. Arg-297 is an active-site residue.

It belongs to the iron/ascorbate-dependent oxidoreductase family. GA3OX subfamily. The cofactor is L-ascorbate. It depends on Fe cation as a cofactor.

It catalyses the reaction gibberellin A20 + 2-oxoglutarate + O2 = gibberellin A1 + succinate + CO2. In terms of biological role, converts the inactive gibberellin precursors GA9 and GA20 in the bioactives gibberellins GA4 and GA1. This is Gibberellin 3-beta-dioxygenase 2-3 (GA3ox2-3) from Triticum aestivum (Wheat).